The sequence spans 155 residues: Ribosomal RNA large subunit methyltransferase H (155 aa).

S-adenosyl-L-methionine-binding positions include L73, G104, and 123-128; that span reads ISKMTF.

It belongs to the RNA methyltransferase RlmH family. In terms of assembly, homodimer.

It is found in the cytoplasm. It catalyses the reaction pseudouridine(1915) in 23S rRNA + S-adenosyl-L-methionine = N(3)-methylpseudouridine(1915) in 23S rRNA + S-adenosyl-L-homocysteine + H(+). In terms of biological role, specifically methylates the pseudouridine at position 1915 (m3Psi1915) in 23S rRNA. This is Ribosomal RNA large subunit methyltransferase H from Francisella philomiragia subsp. philomiragia (strain ATCC 25017 / CCUG 19701 / FSC 153 / O#319-036).